The chain runs to 380 residues: Cytochrome b (380 aa).

The next 4 helical transmembrane spans lie at 34–54 (SGSLLGLCLVVQILTGIFLAM), 78–99 (WFLRYVHANGVSLFFICMYCHI), 114–134 (WNVGVILFLVTILTAFMGYVL), and 179–199 (FFPFHFLFPFIIAALAVIHLV). Residues His84 and His98 each contribute to the heme b site. The heme b site is built by His183 and His197. His202 contributes to the a ubiquinone binding site. 4 helical membrane passes run 227–247 (TKDTVGFILLVAALFSLALLF), 289–309 (LGGVIALVAAILVLFLMPLLN), 321–341 (LSQAAFWLLVAHLFILTWIGS), and 348–369 (YVLLGQVASVLYFSLFIFGFPI).

Belongs to the cytochrome b family. As to quaternary structure, the main subunits of complex b-c1 are: cytochrome b, cytochrome c1 and the Rieske protein. Heme b is required as a cofactor.

It is found in the mitochondrion inner membrane. Component of the ubiquinol-cytochrome c reductase complex (complex III or cytochrome b-c1 complex) that is part of the mitochondrial respiratory chain. The b-c1 complex mediates electron transfer from ubiquinol to cytochrome c. Contributes to the generation of a proton gradient across the mitochondrial membrane that is then used for ATP synthesis. The polypeptide is Cytochrome b (MT-CYB) (Strongylocentrotus purpuratus (Purple sea urchin)).